A 576-amino-acid polypeptide reads, in one-letter code: Colicin-E7 (576 aa).

3 disordered regions span residues 1 to 75 (MSGG…GGGS), 421 to 478 (SSAL…PVPD), and 506 to 557 (DPEL…GVYD). The span at 19-35 (NINGGPTGLGGNGGASD) shows a compositional bias: gly residues. The span at 36 to 45 (GSGWSSENNP) shows a compositional bias: low complexity. The span at 46–75 (WGGGSGSGVHWGGGSGHGNGGGNSNSGGGS) shows a compositional bias: gly residues. Basic and acidic residues-rich tracts occupy residues 424 to 447 (LERR…ESKR) and 535 to 548 (SGKR…HEKP). Zn(2+)-binding residues include histidine 544, histidine 569, and histidine 573.

This sequence belongs to the colicin/pyosin nuclease family.

In terms of biological role, this plasmid-coded bactericidal protein is an endonuclease active on both single- and double-stranded DNA but with undefined specificity. Functionally, colicins are polypeptide toxins produced by and active against E.coli and closely related bacteria. The polypeptide is Colicin-E7 (colE7) (Escherichia coli).